Here is a 357-residue protein sequence, read N- to C-terminus: Glutamine synthetase cytosolic isozyme 1-2 (357 aa).

The region spanning 19-99 (IIAEYIWVGG…VMCDCYTPQG (81 aa)) is the GS beta-grasp domain. The GS catalytic domain maps to 106–357 (KRHSAAKIFS…AETTLLWKQN (252 aa)).

Belongs to the glutamine synthetase family. Homooctamer. Expressed in roots and at lower levels in leaf blades and spikelets (rice flower).

Its subcellular location is the cytoplasm. It catalyses the reaction L-glutamate + NH4(+) + ATP = L-glutamine + ADP + phosphate + H(+). High-affinity glutamine synthetase involved in ammonium assimilation. Plays an important role in the primary assimilation of ammonium taken up by roots. Plays a role in maintaining nitrogen metabolic balance during ammonium assimilation, thus controlling plant growth and development. Reassimilates ammonium generated during lignification within developing tillers, which is probably required for the outgrowth of axillary buds. Required for nitrogen-dependent biosynthesis of cytokinin. Active cytokinin in axillary bud meristem is required for axillary bud outgrowth and necessary for tillering. The sequence is that of Glutamine synthetase cytosolic isozyme 1-2 from Oryza sativa subsp. japonica (Rice).